Reading from the N-terminus, the 66-residue chain is Probable Sec-independent protein translocase protein TatE (66 aa).

A helical membrane pass occupies residues 1 to 21; sequence MEGISITKLLVIAVLIVLLFG. The tract at residues 46–66 is disordered; the sequence is ETPAAKKSDGAEAAPRVENKE.

Belongs to the TatA/E family. TatE subfamily.

It localises to the cell inner membrane. Part of the twin-arginine translocation (Tat) system that transports large folded proteins containing a characteristic twin-arginine motif in their signal peptide across membranes. TatE shares overlapping functions with TatA. The sequence is that of Probable Sec-independent protein translocase protein TatE from Edwardsiella piscicida.